A 145-amino-acid chain; its full sequence is 3-dehydroquinate dehydratase (145 aa).

Residue Y24 is the Proton acceptor of the active site. Substrate is bound by residues N75, H81, and D88. The Proton donor role is filled by H102. Substrate contacts are provided by residues L103–S104 and R113.

The protein belongs to the type-II 3-dehydroquinase family. Homododecamer.

It catalyses the reaction 3-dehydroquinate = 3-dehydroshikimate + H2O. Its pathway is metabolic intermediate biosynthesis; chorismate biosynthesis; chorismate from D-erythrose 4-phosphate and phosphoenolpyruvate: step 3/7. Its function is as follows. Catalyzes a trans-dehydration via an enolate intermediate. The sequence is that of 3-dehydroquinate dehydratase from Chelativorans sp. (strain BNC1).